The chain runs to 308 residues: MKFLWAALVVTLLAGCRADVEEEVKLGQEPDRWQAKQPWEQALGRFWEYLRWVQTLSNKVKEELLNSQVTEELKLLIEETMKEVKAYKEELEKQVGPIAQETQARLSKELQAAQARLESDMEDVRTRLAQYRSEAQAALGQNTDDLQGRLASHLRKLRKRLLRDAEDLQKRLAVYQAGTREAAERGVSAVHERLGPLMMEGPLQAIPPSQQLRERAEAWGQKVRGRLESVGSQARDRLDDMRDQMEELKAKVEEQASQVRLQAEAFQTRLKSWFEPLVQDMQRQWASLVEKVQSTLGISPSTKPSKTK.

Residues 1–18 (MKFLWAALVVTLLAGCRA) form the signal peptide. 8 consecutive repeat copies span residues 75–96 (LLIEETMKEVKAYKEELEKQVG), 97–118 (PIAQETQARLSKELQAAQARLE), 119–140 (SDMEDVRTRLAQYRSEAQAALG), 141–162 (QNTDDLQGRLASHLRKLRKRLL), 163–184 (RDAEDLQKRLAVYQAGTREAAE), 185–206 (RGVSAVHERLGPLMMEGPLQAI), 207–224 (PPSQQLRERAEAWGQKVR), and 225–246 (GRLESVGSQARDRLDDMRDQME). The 8 X 22 AA approximate tandem repeats stretch occupies residues 75–246 (LLIEETMKEV…RLDDMRDQME (172 aa)). Residues 153 to 163 (HLRKLRKRLLR) are LDL and other lipoprotein receptors binding. 157–160 (LRKR) serves as a coordination point for heparin. A lipid-binding and lipoprotein association region spans residues 205 to 281 (AIPPSQQLRE…SWFEPLVQDM (77 aa)). A heparin-binding site is contributed by 220–227 (GQKVRGRL). The interval 257-308 (SQVRLQAEAFQTRLKSWFEPLVQDMQRQWASLVEKVQSTLGISPSTKPSKTK) is homooligomerization. The tract at residues 269 to 281 (RLKSWFEPLVQDM) is specificity for association with VLDL.

The protein belongs to the apolipoprotein A1/A4/E family. In terms of assembly, homotetramer. May interact with ABCA1; functionally associated with ABCA1 in the biogenesis of HDLs. May interact with APP/A4 amyloid-beta peptide; the interaction is extremely stable in vitro but its physiological significance is unclear. May interact with MAPT. May interact with MAP2. In the cerebrospinal fluid, interacts with secreted SORL1. Interacts with PMEL; this allows the loading of PMEL luminal fragment on ILVs to induce fibril nucleation. Post-translationally, APOE exists as multiple glycosylated and sialylated glycoforms within cells and in plasma. The extent of glycosylation and sialylation are tissue and context specific. Glycated in plasma VLDL. In terms of processing, phosphorylated by FAM20C in the extracellular medium.

It localises to the secreted. The protein resides in the extracellular space. It is found in the extracellular matrix. The protein localises to the extracellular vesicle. Its subcellular location is the endosome. It localises to the multivesicular body. APOE is an apolipoprotein, a protein associating with lipid particles, that mainly functions in lipoprotein-mediated lipid transport between organs via the plasma and interstitial fluids. APOE is a core component of plasma lipoproteins and is involved in their production, conversion and clearance. Apolipoproteins are amphipathic molecules that interact both with lipids of the lipoprotein particle core and the aqueous environment of the plasma. As such, APOE associates with chylomicrons, chylomicron remnants, very low density lipoproteins (VLDL) and intermediate density lipoproteins (IDL) but shows a preferential binding to high-density lipoproteins (HDL). It also binds a wide range of cellular receptors including the LDL receptor/LDLR and the very low-density lipoprotein receptor/VLDLR that mediate the cellular uptake of the APOE-containing lipoprotein particles. Finally, APOE also has a heparin-binding activity and binds heparan-sulfate proteoglycans on the surface of cells, a property that supports the capture and the receptor-mediated uptake of APOE-containing lipoproteins by cells. The sequence is that of Apolipoprotein E (APOE) from Pteropus vampyrus (Large flying fox).